A 482-amino-acid polypeptide reads, in one-letter code: tRNA sulfurtransferase (482 aa).

The THUMP domain maps to 61–165 (LAIRDALTRI…DDRLLLIKGR (105 aa)). Residues 183–184 (LI), lysine 265, glycine 287, and glutamine 296 contribute to the ATP site. Cysteine 344 and cysteine 456 form a disulfide bridge. The region spanning 404–482 (FGPNDVILDI…GFNNVKVYRP (79 aa)) is the Rhodanese domain. Cysteine 456 (cysteine persulfide intermediate) is an active-site residue.

This sequence belongs to the ThiI family.

The protein localises to the cytoplasm. It carries out the reaction [ThiI sulfur-carrier protein]-S-sulfanyl-L-cysteine + a uridine in tRNA + 2 reduced [2Fe-2S]-[ferredoxin] + ATP + H(+) = [ThiI sulfur-carrier protein]-L-cysteine + a 4-thiouridine in tRNA + 2 oxidized [2Fe-2S]-[ferredoxin] + AMP + diphosphate. It catalyses the reaction [ThiS sulfur-carrier protein]-C-terminal Gly-Gly-AMP + S-sulfanyl-L-cysteinyl-[cysteine desulfurase] + AH2 = [ThiS sulfur-carrier protein]-C-terminal-Gly-aminoethanethioate + L-cysteinyl-[cysteine desulfurase] + A + AMP + 2 H(+). It functions in the pathway cofactor biosynthesis; thiamine diphosphate biosynthesis. In terms of biological role, catalyzes the ATP-dependent transfer of a sulfur to tRNA to produce 4-thiouridine in position 8 of tRNAs, which functions as a near-UV photosensor. Also catalyzes the transfer of sulfur to the sulfur carrier protein ThiS, forming ThiS-thiocarboxylate. This is a step in the synthesis of thiazole, in the thiamine biosynthesis pathway. The sulfur is donated as persulfide by IscS. The protein is tRNA sulfurtransferase of Escherichia fergusonii (strain ATCC 35469 / DSM 13698 / CCUG 18766 / IAM 14443 / JCM 21226 / LMG 7866 / NBRC 102419 / NCTC 12128 / CDC 0568-73).